The following is a 426-amino-acid chain: D-tagatose-1,6-bisphosphate aldolase subunit KbaZ (426 aa).

Belongs to the GatZ/KbaZ family. KbaZ subfamily. As to quaternary structure, forms a complex with KbaY.

The protein operates within carbohydrate metabolism; D-tagatose 6-phosphate degradation; D-glyceraldehyde 3-phosphate and glycerone phosphate from D-tagatose 6-phosphate: step 2/2. Component of the tagatose-1,6-bisphosphate aldolase KbaYZ that is required for full activity and stability of the Y subunit. Could have a chaperone-like function for the proper and stable folding of KbaY. When expressed alone, KbaZ does not show any aldolase activity. The protein is D-tagatose-1,6-bisphosphate aldolase subunit KbaZ of Escherichia coli (strain K12 / MC4100 / BW2952).